Reading from the N-terminus, the 300-residue chain is Ubiquinone biosynthesis protein COQ4, mitochondrial (300 aa).

Zn(2+) contacts are provided by His-173, Asp-174, His-177, and Glu-189.

Belongs to the COQ4 family. Component of a multi-subunit COQ enzyme complex, composed of at least COQ3, COQ4, COQ5, COQ6, COQ7 and COQ9. The cofactor is Zn(2+).

The protein resides in the mitochondrion inner membrane. The enzyme catalyses a 4-hydroxy-3-methoxy-5-(all-trans-polyprenyl)benzoate + H(+) = a 2-methoxy-6-(all-trans-polyprenyl)phenol + CO2. It functions in the pathway cofactor biosynthesis; ubiquinone biosynthesis. Functionally, lyase that catalyzes the C1-decarboxylation of 4-hydroxy-3-methoxy-5-(all-trans-polyprenyl)benzoic acid into 2-methoxy-6-(all-trans-polyprenyl)phenol during ubiquinone biosynthesis. The polypeptide is Ubiquinone biosynthesis protein COQ4, mitochondrial (Cryptococcus neoformans var. neoformans serotype D (strain B-3501A) (Filobasidiella neoformans)).